The primary structure comprises 943 residues: Translation initiation factor IF-2 (943 aa).

The tract at residues 29 to 357 is disordered; it reads LSVKSHSSSV…KPVTERKFHE (329 aa). Composition is skewed to basic and acidic residues over residues 69–82, 112–137, 145–155, 163–196, and 224–253; these read PKEE…DKAS, FKAE…DNRN, QGKRHNNDRRN, DHNK…RDNA, and RQSE…EKQQ. Residues 254 to 266 show a composition bias toward low complexity; that stretch reads AEVAVQKAAAETK. The span at 296 to 309 shows a compositional bias: basic and acidic residues; that stretch reads KSRDNRRVNEDGPK. Positions 313–332 are enriched in low complexity; sequence NNKWNNQNQVRNQRNSNWNK. The tr-type G domain occupies 445 to 614; sequence ERAPVVTIMG…LLVAEVEELK (170 aa). The interval 454-461 is G1; that stretch reads GHVDHGKT. Position 454 to 461 (454 to 461) interacts with GTP; it reads GHVDHGKT. The segment at 479–483 is G2; that stretch reads GITQH. Residues 500–503 are G3; that stretch reads DTPG. GTP is bound by residues 500–504 and 554–557; these read DTPGH and NKID. Residues 554–557 form a G4 region; that stretch reads NKID. A G5 region spans residues 590 to 592; sequence SAK.

This sequence belongs to the TRAFAC class translation factor GTPase superfamily. Classic translation factor GTPase family. IF-2 subfamily.

The protein localises to the cytoplasm. Functionally, one of the essential components for the initiation of protein synthesis. Protects formylmethionyl-tRNA from spontaneous hydrolysis and promotes its binding to the 30S ribosomal subunits. Also involved in the hydrolysis of GTP during the formation of the 70S ribosomal complex. The polypeptide is Translation initiation factor IF-2 (Streptococcus thermophilus (strain CNRZ 1066)).